The sequence spans 326 residues: Arabinose 5-phosphate isomerase KdsD (326 aa).

An SIS domain is found at alanine 38–phenylalanine 181. Substrate contacts are provided by residues glycine 72–threonine 73, histidine 79, histidine 85, threonine 111–glycine 120, and serine 145–glycine 147. Histidine 79 is a Zn(2+) binding site. CBS domains follow at residues methionine 207–valine 265 and methionine 274–methionine 326.

It belongs to the SIS family. GutQ/KpsF subfamily. Homotetramer.

The catalysed reaction is D-arabinose 5-phosphate = D-ribulose 5-phosphate. The protein operates within carbohydrate biosynthesis; 3-deoxy-D-manno-octulosonate biosynthesis; 3-deoxy-D-manno-octulosonate from D-ribulose 5-phosphate: step 1/3. It functions in the pathway bacterial outer membrane biogenesis; lipopolysaccharide biosynthesis. In terms of biological role, involved in the biosynthesis of 3-deoxy-D-manno-octulosonate (KDO), a unique 8-carbon sugar component of lipopolysaccharides (LPSs). Catalyzes the reversible aldol-ketol isomerization between D-ribulose 5-phosphate (Ru5P) and D-arabinose 5-phosphate (A5P). This is Arabinose 5-phosphate isomerase KdsD (kdsD) from Pseudomonas aeruginosa (strain ATCC 15692 / DSM 22644 / CIP 104116 / JCM 14847 / LMG 12228 / 1C / PRS 101 / PAO1).